The sequence spans 393 residues: Pyrimidine monooxygenase RutA (393 aa).

FMN contacts are provided by residues 79-80, Asn-145, Glu-154, 170-171, and Ser-220; these read IK and RY.

The protein belongs to the NtaA/SnaA/DszA monooxygenase family. RutA subfamily.

The enzyme catalyses uracil + FMNH2 + NADH + O2 = (Z)-3-ureidoacrylate + FMN + NAD(+) + H2O + H(+). It carries out the reaction thymine + FMNH2 + NADH + O2 = (Z)-2-methylureidoacrylate + FMN + NAD(+) + H2O + H(+). In terms of biological role, catalyzes the pyrimidine ring opening between N-3 and C-4 by an unusual flavin hydroperoxide-catalyzed mechanism, adding oxygen atoms in the process to yield ureidoacrylate peracid, that immediately reacts with FMN forming ureidoacrylate and FMN-N(5)-oxide. The FMN-N(5)-oxide reacts spontaneously with NADH to produce FMN. Requires the flavin reductase RutF to regenerate FMN in vivo. The polypeptide is Pyrimidine monooxygenase RutA (Escherichia coli O9:H4 (strain HS)).